A 179-amino-acid chain; its full sequence is MELHATTIFAVQHDGKAAMAGDGQVTLGESVVMKHTAKKVRRLFHDKVIAGFAGSVADAFTLFEKFEAKLNEYNGNLERAAVELAQQWRSDSVLRKLEAMLIVMDKDTLLLVSGTGEVIEPDDGILAIGSGGNYALAAGRALKRHNGGQMEAKDIARHALEIASEICVFTNDHITVEEL.

Threonine 6 is an active-site residue. Residues serine 164, cysteine 167, and threonine 170 each coordinate Na(+).

Belongs to the peptidase T1B family. HslV subfamily. As to quaternary structure, a double ring-shaped homohexamer of HslV is capped on each side by a ring-shaped HslU homohexamer. The assembly of the HslU/HslV complex is dependent on binding of ATP.

Its subcellular location is the cytoplasm. The catalysed reaction is ATP-dependent cleavage of peptide bonds with broad specificity.. With respect to regulation, allosterically activated by HslU binding. Protease subunit of a proteasome-like degradation complex believed to be a general protein degrading machinery. This is ATP-dependent protease subunit HslV from Listeria innocua serovar 6a (strain ATCC BAA-680 / CLIP 11262).